Consider the following 318-residue polypeptide: Probable ABC transporter permease protein MG189 (318 aa).

A run of 6 helical transmembrane segments spans residues 42–62 (VLGF…VVSF), 98–118 (AIVV…FFTI), 134–154 (LVWF…LIGQ), 169–189 (PLIV…GFMY), 230–250 (VGIL…LLLG), and 282–302 (LKMS…FLFH). The ABC transmembrane type-1 domain maps to 99–301 (IVVNTLVTVL…LPMFIIYFLF (203 aa)).

This sequence belongs to the binding-protein-dependent transport system permease family. MalFG subfamily.

It is found in the cell membrane. Functionally, probably part of a binding-protein-dependent transport system. Probably responsible for the translocation of the substrate across the membrane. The sequence is that of Probable ABC transporter permease protein MG189 from Mycoplasma genitalium (strain ATCC 33530 / DSM 19775 / NCTC 10195 / G37) (Mycoplasmoides genitalium).